Reading from the N-terminus, the 219-residue chain is Thiamine-phosphate synthase (219 aa).

4-amino-2-methyl-5-(diphosphooxymethyl)pyrimidine is bound by residues 48–52 and N84; that span reads QFRQK. Mg(2+) is bound by residues D85 and D104. Residue S123 participates in 4-amino-2-methyl-5-(diphosphooxymethyl)pyrimidine binding. 150 to 152 lines the 2-[(2R,5Z)-2-carboxy-4-methylthiazol-5(2H)-ylidene]ethyl phosphate pocket; sequence TQS. K153 lines the 4-amino-2-methyl-5-(diphosphooxymethyl)pyrimidine pocket. Residues G181 and 199–200 contribute to the 2-[(2R,5Z)-2-carboxy-4-methylthiazol-5(2H)-ylidene]ethyl phosphate site; that span reads IS.

The protein belongs to the thiamine-phosphate synthase family. Mg(2+) serves as cofactor.

The catalysed reaction is 2-[(2R,5Z)-2-carboxy-4-methylthiazol-5(2H)-ylidene]ethyl phosphate + 4-amino-2-methyl-5-(diphosphooxymethyl)pyrimidine + 2 H(+) = thiamine phosphate + CO2 + diphosphate. It catalyses the reaction 2-(2-carboxy-4-methylthiazol-5-yl)ethyl phosphate + 4-amino-2-methyl-5-(diphosphooxymethyl)pyrimidine + 2 H(+) = thiamine phosphate + CO2 + diphosphate. It carries out the reaction 4-methyl-5-(2-phosphooxyethyl)-thiazole + 4-amino-2-methyl-5-(diphosphooxymethyl)pyrimidine + H(+) = thiamine phosphate + diphosphate. Its pathway is cofactor biosynthesis; thiamine diphosphate biosynthesis; thiamine phosphate from 4-amino-2-methyl-5-diphosphomethylpyrimidine and 4-methyl-5-(2-phosphoethyl)-thiazole: step 1/1. Its function is as follows. Condenses 4-methyl-5-(beta-hydroxyethyl)thiazole monophosphate (THZ-P) and 2-methyl-4-amino-5-hydroxymethyl pyrimidine pyrophosphate (HMP-PP) to form thiamine monophosphate (TMP). The chain is Thiamine-phosphate synthase from Helicobacter pylori (strain Shi470).